A 1612-amino-acid polypeptide reads, in one-letter code: Replicase large subunit (1612 aa).

The segment at 52-466 (RSISEEQTLI…FLQTKLAMLK (415 aa)) is methyltransferase. Positions 72-280 (TFYNTQNAVH…HSYSNVLKYV (209 aa)) constitute an Alphavirus-like MT domain. The 162-residue stretch at 803–964 (LVYSDMGKIR…QLEVDAVETR (162 aa)) folds into the (+)RNA virus helicase ATP-binding domain. The helicase stretch occupies residues 831-1086 (TLVDGVPGCG…RHTRSIKYYT (256 aa)). ATP is bound by residues 838-843 (GCGKTK), arginine 870, 968-969 (LR), arginine 1077, and 1098-1101 (DLEC). The 153-residue stretch at 965–1117 (RTTLRCPADI…DMYKVDVSTQ (153 aa)) folds into the (+)RNA virus helicase C-terminal domain. The region spanning 1380-1493 (MDILELDISK…YFPKGTDFPD (114 aa)) is the RdRp catalytic domain.

The protein belongs to the ssRNA positive-strand viruses RNA-directed RNA polymerase family. As to quaternary structure, heterodimer of a large and a small subunit. Both large and small subunits interact, via an ATP bridge, with host protein Tm-1 (e.g. tomato Tm-1 AC A7M6E7 and AC A7M6E8).

It carries out the reaction RNA(n) + a ribonucleoside 5'-triphosphate = RNA(n+1) + diphosphate. The catalysed reaction is ATP + H2O = ADP + phosphate + H(+). Its activity is regulated as follows. In resistant plants, is bound by host protein Tm-1 (e.g. tomato Tm-1 AC A7M6E7), thereby inhibiting replication complex activity. Its function is as follows. Is an RNA-dependent RNA polymerase active in viral RNA replication. Is a methyltransferase active in RNA capping and an RNA helicase. Methyltransferase displays a cytoplasmic capping enzyme activity. This function is necessary since all viral RNAs are synthesized in the cytoplasm, and host capping enzymes are restricted to the nucleus. Helicase region probably exhibits NTPase and RNA unwinding activities (Potential). It also acts as a suppressor of RNA-mediated gene silencing, also known as post-transcriptional gene silencing (PTGS), a mechanism of plant viral defense that limits the accumulation of viral RNAs. May mediate silencing suppression through either inhibition of HEN1-mediated siRNA or siRNA demethylation. The protein is Replicase large subunit of Pepper mild mottle virus (strain Japan) (PMMV-J).